Here is a 167-residue protein sequence, read N- to C-terminus: Photosystem I assembly protein Ycf3 (167 aa).

3 TPR repeats span residues 35 to 68, 72 to 105, and 120 to 153; these read AFSY…ETDA, SYIL…NPSL, and GEQA…APTN.

Belongs to the Ycf3 family.

It is found in the plastid. It localises to the chloroplast thylakoid membrane. Functionally, essential for the assembly of the photosystem I (PSI) complex. May act as a chaperone-like factor to guide the assembly of the PSI subunits. The protein is Photosystem I assembly protein Ycf3 of Chlorella vulgaris (Green alga).